Here is a 106-residue protein sequence, read N- to C-terminus: Iron-sulfur cluster assembly protein CyaY (106 aa).

It belongs to the frataxin family.

Its function is as follows. Involved in iron-sulfur (Fe-S) cluster assembly. May act as a regulator of Fe-S biogenesis. The chain is Iron-sulfur cluster assembly protein CyaY from Escherichia coli O7:K1 (strain IAI39 / ExPEC).